Reading from the N-terminus, the 880-residue chain is Probable dipeptidyl-aminopeptidase B (880 aa).

The segment covering 1 to 26 (MPRQRAPKEEEAELLTKQERSARSSE) has biased composition (basic and acidic residues). The disordered stretch occupies residues 1–71 (MPRQRAPKEE…KYTDEDDEAQ (71 aa)). The Cytoplasmic segment spans residues 1 to 93 (MPRQRAPKEE…PISVDKKTRR (93 aa)). The segment covering 30–40 (DTSISSISTTS) has biased composition (low complexity). Residues 94 to 114 (WLWIVGIACVTGWALALVFFL) traverse the membrane as a helical; Signal-anchor for type II membrane protein segment. Residues 115–880 (MSGSYKHVST…AQVDARMERR (766 aa)) lie on the Vacuolar side of the membrane. N-linked (GlcNAc...) asparagine glycosylation occurs at asparagine 533. The active-site Charge relay system is the serine 724. Asparagine 778 is a glycosylation site (N-linked (GlcNAc...) asparagine). Residues aspartate 801 and histidine 834 each act as charge relay system in the active site.

This sequence belongs to the peptidase S9B family.

Its subcellular location is the vacuole membrane. The enzyme catalyses Release of an N-terminal dipeptide, Xaa-Yaa-|-Zaa-, from a polypeptide, preferentially when Yaa is Pro, provided Zaa is neither Pro nor hydroxyproline.. Functionally, type IV dipeptidyl-peptidase which removes N-terminal dipeptides sequentially from polypeptides having unsubstituted N-termini provided that the penultimate residue is proline. This is Probable dipeptidyl-aminopeptidase B (dapB) from Pyrenophora tritici-repentis (strain Pt-1C-BFP) (Wheat tan spot fungus).